Consider the following 247-residue polypeptide: ATP synthase subunit a, chloroplastic (247 aa).

Helical transmembrane passes span glycine 36–glycine 56, isoleucine 95–isoleucine 115, isoleucine 134–serine 154, leucine 199–leucine 219, and glycine 220–glycine 240.

This sequence belongs to the ATPase A chain family. In terms of assembly, F-type ATPases have 2 components, CF(1) - the catalytic core - and CF(0) - the membrane proton channel. CF(1) has five subunits: alpha(3), beta(3), gamma(1), delta(1), epsilon(1). CF(0) has four main subunits: a, b, b' and c.

The protein localises to the plastid. It is found in the chloroplast thylakoid membrane. Key component of the proton channel; it plays a direct role in the translocation of protons across the membrane. The protein is ATP synthase subunit a, chloroplastic of Tupiella akineta (Green alga).